A 112-amino-acid chain; its full sequence is Nucleoid-associated protein CV_1611 (112 aa).

This sequence belongs to the YbaB/EbfC family. In terms of assembly, homodimer.

The protein resides in the cytoplasm. It is found in the nucleoid. Its function is as follows. Binds to DNA and alters its conformation. May be involved in regulation of gene expression, nucleoid organization and DNA protection. The sequence is that of Nucleoid-associated protein CV_1611 from Chromobacterium violaceum (strain ATCC 12472 / DSM 30191 / JCM 1249 / CCUG 213 / NBRC 12614 / NCIMB 9131 / NCTC 9757 / MK).